The chain runs to 220 residues: CASP-like protein 4B1 (220 aa).

At M1 to K74 the chain is on the cytoplasmic side. The tract at residues T13–G56 is disordered. The helical transmembrane segment at S75–A95 threads the bilayer. Residues S96–Q109 are Extracellular-facing. A helical transmembrane segment spans residues E110–A127. Over Q128–D152 the chain is Cytoplasmic. The helical transmembrane segment at F153–I173 threads the bilayer. Residues T174–A188 are Extracellular-facing. N184 is a glycosylation site (N-linked (GlcNAc...) asparagine). Residues T189 to V209 form a helical membrane-spanning segment. The Cytoplasmic portion of the chain corresponds to S210–M220.

It belongs to the Casparian strip membrane proteins (CASP) family. In terms of assembly, homodimer and heterodimers.

The protein resides in the cell membrane. In Sorghum bicolor (Sorghum), this protein is CASP-like protein 4B1.